A 398-amino-acid chain; its full sequence is Phosphoglycerate kinase (398 aa).

Residues 23–25 (DLN), arginine 38, 61–64 (HFGR), arginine 120, and arginine 153 contribute to the substrate site. Residues lysine 203, glutamate 325, and 355–358 (GGDT) contribute to the ATP site.

The protein belongs to the phosphoglycerate kinase family. Monomer.

Its subcellular location is the cytoplasm. The enzyme catalyses (2R)-3-phosphoglycerate + ATP = (2R)-3-phospho-glyceroyl phosphate + ADP. It functions in the pathway carbohydrate degradation; glycolysis; pyruvate from D-glyceraldehyde 3-phosphate: step 2/5. The chain is Phosphoglycerate kinase from Mesorhizobium japonicum (strain LMG 29417 / CECT 9101 / MAFF 303099) (Mesorhizobium loti (strain MAFF 303099)).